We begin with the raw amino-acid sequence, 171 residues long: Shikimate kinase (171 aa).

14-19 (GAGKST) lines the ATP pocket. S18 contributes to the Mg(2+) binding site. Residues D36, R60, and G82 each coordinate substrate. An ATP-binding site is contributed by R120. R139 is a binding site for substrate. Q156 provides a ligand contact to ATP.

This sequence belongs to the shikimate kinase family. In terms of assembly, monomer. Mg(2+) serves as cofactor.

The protein localises to the cytoplasm. The enzyme catalyses shikimate + ATP = 3-phosphoshikimate + ADP + H(+). The protein operates within metabolic intermediate biosynthesis; chorismate biosynthesis; chorismate from D-erythrose 4-phosphate and phosphoenolpyruvate: step 5/7. In terms of biological role, catalyzes the specific phosphorylation of the 3-hydroxyl group of shikimic acid using ATP as a cosubstrate. This chain is Shikimate kinase, found in Shewanella amazonensis (strain ATCC BAA-1098 / SB2B).